We begin with the raw amino-acid sequence, 228 residues long: LexA repressor (228 aa).

A DNA-binding region (H-T-H motif) is located at residues 26-46 (FDEMKEALDLRSKSGIHRLIT). Active-site for autocatalytic cleavage activity residues include Ser149 and Lys187.

The protein belongs to the peptidase S24 family. Homodimer.

The catalysed reaction is Hydrolysis of Ala-|-Gly bond in repressor LexA.. Its function is as follows. Represses a number of genes involved in the response to DNA damage (SOS response), including recA and lexA. In the presence of single-stranded DNA, RecA interacts with LexA causing an autocatalytic cleavage which disrupts the DNA-binding part of LexA, leading to derepression of the SOS regulon and eventually DNA repair. This is LexA repressor from Jannaschia sp. (strain CCS1).